Reading from the N-terminus, the 426-residue chain is Histidine--tRNA ligase (426 aa).

This sequence belongs to the class-II aminoacyl-tRNA synthetase family. Homodimer.

The protein localises to the cytoplasm. The catalysed reaction is tRNA(His) + L-histidine + ATP = L-histidyl-tRNA(His) + AMP + diphosphate + H(+). The protein is Histidine--tRNA ligase of Streptococcus thermophilus (strain ATCC BAA-491 / LMD-9).